The chain runs to 729 residues: Triadin (729 aa).

The disordered stretch occupies residues 1 to 28 (MTEITAEGNASTTTTVIDSKNGSVPKSP). At 1–47 (MTEITAEGNASTTTTVIDSKNGSVPKSPGKVLKRTVTEDIVTTFSSP) the chain is on the cytoplasmic side. Residues 8–24 (GNASTTTTVIDSKNGSV) show a composition bias toward polar residues. Residues 48 to 68 (AAWLLVIALIITWSAVAIVMF) form a helical membrane-spanning segment. Topologically, residues 69 to 729 (DLVDYKNFSA…NSPGQKQQGQ (661 aa)) are lumenal. Asn-75 carries an N-linked (GlcNAc...) asparagine glycan. Residues 117–129 (EDEEDDDGDEDTD) show a composition bias toward acidic residues. Disordered regions lie at residues 117–265 (EDEE…EQKD), 281–682 (DLKP…PTKQ), and 705–729 (PFTP…QQGQ). Composition is skewed to basic and acidic residues over residues 130–265 (KGEI…EQKD), 309–357 (LEEK…KASE), 371–433 (AKKD…KEEI), 444–509 (GKKE…EVKP), 516–531 (GKKE…KEAK), 538–562 (VQIH…EKVL), 580–598 (KKAE…DKPK), and 609–674 (ESGK…KEGT). An N-linked (GlcNAc...) asparagine glycan is attached at Asn-647. The segment covering 715-729 (SSGQANSPGQKQQGQ) has biased composition (polar residues).

Homooligomer of variable subunit number; disulfide-linked. Interacts with CASQ1 and RYR1 in skeletal muscle. Interacts with CASQ2. In terms of processing, phosphorylated by CaMK2. N-glycosylated.

It localises to the cell membrane. It is found in the sarcoplasmic reticulum membrane. Contributes to the regulation of lumenal Ca2+ release via the sarcoplasmic reticulum calcium release channels RYR1 and RYR2, a key step in triggering skeletal and heart muscle contraction. Required for normal organization of the triad junction, where T-tubules and the sarcoplasmic reticulum terminal cisternae are in close contact. Required for normal skeletal muscle strength. Plays a role in excitation-contraction coupling in the heart and in regulating the rate of heart beats. The sequence is that of Triadin (TRDN) from Homo sapiens (Human).